The following is a 546-amino-acid chain: DDB1- and CUL4-associated factor 11 (546 aa).

The segment covering 1 to 19 has biased composition (low complexity); that stretch reads MGSRNSSSAGSGSGDPSEG. Residues 1-40 form a disordered region; it reads MGSRNSSSAGSGSGDPSEGLTRRGAGLRRSEEEEEEDEDV. Position 75 is a phosphoserine (Ser75). 7 WD repeats span residues 170-210, 216-258, 263-302, 305-345, 353-392, 435-480, and 481-520; these read SYSQ…RKFK, DVGW…TALD, ERRF…RTLQ, SHED…EDDP, GHQD…SREG, GVLH…KKLT, and NHKA…YFQD. A disordered region spans residues 523–546; that stretch reads PESEECASAPAPVPRSSTPFSSPQ. Polar residues predominate over residues 537–546; that stretch reads RSSTPFSSPQ.

In terms of assembly, interacts with DDB1 and CUL4A.

It participates in protein modification; protein ubiquitination. In terms of biological role, may function as a substrate receptor for CUL4-DDB1 E3 ubiquitin-protein ligase complex. This Pongo abelii (Sumatran orangutan) protein is DDB1- and CUL4-associated factor 11 (DCAF11).